Here is a 156-residue protein sequence, read N- to C-terminus: MPRKGPAPKHPVVVDPVYGSPLVTALVNKVLLSGKKSVAERIVYGALEGAKNKTGNDPVVTLKRALDNVKPTLEVRSRRVGGATYQVPVEVRAGRSTTLALRWIVGYSRGRREKTMTERLMNELIDASNGLGASVKRREDTHKMAESNKAFAHYRW.

Belongs to the universal ribosomal protein uS7 family. As to quaternary structure, part of the 30S ribosomal subunit. Contacts proteins S9 and S11.

Functionally, one of the primary rRNA binding proteins, it binds directly to 16S rRNA where it nucleates assembly of the head domain of the 30S subunit. Is located at the subunit interface close to the decoding center, probably blocks exit of the E-site tRNA. The protein is Small ribosomal subunit protein uS7 of Parafrankia sp. (strain EAN1pec).